Reading from the N-terminus, the 313-residue chain is Ribosomal RNA small subunit methyltransferase H (313 aa).

S-adenosyl-L-methionine contacts are provided by residues 35–37, D55, F79, D101, and Q108; that span reads GGH.

It belongs to the methyltransferase superfamily. RsmH family.

The protein resides in the cytoplasm. The enzyme catalyses cytidine(1402) in 16S rRNA + S-adenosyl-L-methionine = N(4)-methylcytidine(1402) in 16S rRNA + S-adenosyl-L-homocysteine + H(+). Functionally, specifically methylates the N4 position of cytidine in position 1402 (C1402) of 16S rRNA. The chain is Ribosomal RNA small subunit methyltransferase H from Shigella flexneri serotype 5b (strain 8401).